A 299-amino-acid polypeptide reads, in one-letter code: Oxygen-dependent coproporphyrinogen-III oxidase (299 aa).

Residue serine 92 participates in substrate binding. Residues histidine 96 and histidine 106 each contribute to the a divalent metal cation site. Histidine 106 serves as the catalytic Proton donor. Position 108–110 (108–110 (NVR)) interacts with substrate. Residues histidine 145 and histidine 175 each coordinate a divalent metal cation. The segment at 240–275 (YVEFNLVWDRGTLFGLQTGGRTESILMSMPPLVRWE) is important for dimerization. 258–260 (GGR) is a substrate binding site.

This sequence belongs to the aerobic coproporphyrinogen-III oxidase family. As to quaternary structure, homodimer. A divalent metal cation serves as cofactor.

Its subcellular location is the cytoplasm. The enzyme catalyses coproporphyrinogen III + O2 + 2 H(+) = protoporphyrinogen IX + 2 CO2 + 2 H2O. It participates in porphyrin-containing compound metabolism; protoporphyrin-IX biosynthesis; protoporphyrinogen-IX from coproporphyrinogen-III (O2 route): step 1/1. Involved in the heme biosynthesis. Catalyzes the aerobic oxidative decarboxylation of propionate groups of rings A and B of coproporphyrinogen-III to yield the vinyl groups in protoporphyrinogen-IX. The chain is Oxygen-dependent coproporphyrinogen-III oxidase from Enterobacter sp. (strain 638).